The primary structure comprises 248 residues: Cyclin-Q (248 aa).

N-acetylmethionine is present on methionine 1. Residues 1–12 (MEAPEGGGGGPA) show a composition bias toward gly residues. The interval 1–21 (MEAPEGGGGGPAARGPEGQPA) is disordered.

This sequence belongs to the cyclin family. Cyclin-like FAM58 subfamily. In terms of assembly, associates with CDK10 to promote its kinase activity. Interacts with SALL1.

Activating cyclin for the cyclin-associated kinase CDK10. The protein is Cyclin-Q of Homo sapiens (Human).